Reading from the N-terminus, the 257-residue chain is Dihydroorotate dehydrogenase B (NAD(+)), electron transfer subunit (257 aa).

Residues 2-102 form the FAD-binding FR-type domain; the sequence is IGRERMTVVS…LGPLGHGFPL (101 aa). FAD is bound by residues 53–56, 70–72, and 77–78; these read RPLS, IYR, and GT. 4 residues coordinate [2Fe-2S] cluster: cysteine 221, cysteine 226, cysteine 229, and cysteine 244.

Belongs to the PyrK family. In terms of assembly, heterotetramer of 2 PyrK and 2 PyrD type B subunits. It depends on [2Fe-2S] cluster as a cofactor. FAD serves as cofactor.

It participates in pyrimidine metabolism; UMP biosynthesis via de novo pathway; orotate from (S)-dihydroorotate (NAD(+) route): step 1/1. Its function is as follows. Responsible for channeling the electrons from the oxidation of dihydroorotate from the FMN redox center in the PyrD type B subunit to the ultimate electron acceptor NAD(+). The chain is Dihydroorotate dehydrogenase B (NAD(+)), electron transfer subunit from Geobacillus thermodenitrificans (strain NG80-2).